Consider the following 369-residue polypeptide: MEPIQKMDSLNNKEGQPDKKRKKHESEKEGENEVLEIDVTKPVPPSKKLMRKLRKAGKIDKDGNWTPEALEEAKKKEEKRLKRLDAKYGRKEEGESQEESKRSPWGIWVGNLSFHTTKEILTDFFVRETSEMIKEVSEENIKPITTEQITRIHMPMSKEKRFQNKGFAYVDFATEDALKLALQCSEKALNGRNILIKSNTDFSGRPSKPANTLSKTASIQSSKKEPSSILFVGNLDFETTDADLKEHFGQVGQIRRVRLMTFEDTGKCKGFGFVDFPDIDTCMKAMELGHNSWRLEYGEDRSKRMRNKSPMARSGRFNDAESLGQEDKPNFKRARKIDPRSVRPGAALAKAQRSSAAIVEPAGQKIKFD.

3 disordered regions span residues 1-77 (MEPI…KKKE), 200-219 (TDFSGRPSKPANTLSKTASI), and 304-369 (RMRN…IKFD). The region spanning 105 to 206 (WGIWVGNLSF…KSNTDFSGRP (102 aa)) is the RRM 1 domain. The segment covering 209–219 (PANTLSKTASI) has biased composition (polar residues). Positions 228–310 (SILFVGNLDF…RSKRMRNKSP (83 aa)) constitute an RRM 2 domain. Basic and acidic residues predominate over residues 325-341 (QEDKPNFKRARKIDPRS). Residues 346 to 357 (AALAKAQRSSAA) are compositionally biased toward low complexity.

It localises to the nucleus. The sequence is that of RNA-binding protein rnp24 (rnp24) from Schizosaccharomyces pombe (strain 972 / ATCC 24843) (Fission yeast).